Consider the following 322-residue polypeptide: Ferredoxin--NADP reductase (322 aa).

FAD-binding residues include Asp34, Gln42, Tyr47, Val87, Phe120, Asp279, and Thr320.

The protein belongs to the ferredoxin--NADP reductase type 2 family. Homodimer. FAD serves as cofactor.

The catalysed reaction is 2 reduced [2Fe-2S]-[ferredoxin] + NADP(+) + H(+) = 2 oxidized [2Fe-2S]-[ferredoxin] + NADPH. This Streptococcus pneumoniae (strain Hungary19A-6) protein is Ferredoxin--NADP reductase.